The chain runs to 490 residues: MPRFAEQQLYIGGQYVAASSGQTFDSINPATGEVLAKVQRASQADVDRAVASAAEGQKVWAAMTAMQRSRILRRAVDILRERNDELAELETLDTGKPLSETRYVDIVTGADVLEYYAGLIPAIEGEQIPLRESSFVYTRREPLGVVAGIGAWNYPIQIALWKSAPALAAGNAMIFKPSEVTSLTALKLAEIYTEAGLPAGVFNVLTGSGREVGQWLTEHPGIEKVSFTGGTVTGKKVMASASSSSLKEVTMELGGKSPLIVFEDADLDRAADIAVMANFYSSGQVCTNGTRVFVPRMLQARFEAKVLERVKRIRLGDPLDDATNFGPLVSYAHMESVLGYIEKGRSEGARLLIGGTRVSDGDYAKGAYVAPTVFTDCRDDMTIVREEIFGPVMSILIYDSEEEVIRRANDTDYGLAAGVVTRDLNRAHRVIHKLEAGICWINTWGESPAEMPVGGYKQSGVGRENGLVTLGHYTRIKSVQVELGGYSSVF.

Positions 26, 27, and 93 each coordinate K(+). Residue 150–152 coordinates NAD(+); it reads GAW. Catalysis depends on Lys162, which acts as the Charge relay system. 176–179 provides a ligand contact to NAD(+); it reads KPSE. Val180 lines the K(+) pocket. 230–233 serves as a coordination point for NAD(+); that stretch reads GTVT. Residue Leu246 coordinates K(+). Catalysis depends on Glu252, which acts as the Proton acceptor. 3 residues coordinate NAD(+): Gly254, Cys286, and Glu387. Catalysis depends on Cys286, which acts as the Nucleophile. Residue Cys286 is modified to Cysteine sulfenic acid (-SOH). Residues Lys457 and Gly460 each contribute to the K(+) site. The Charge relay system role is filled by Glu464.

This sequence belongs to the aldehyde dehydrogenase family. As to quaternary structure, dimer of dimers. Requires K(+) as cofactor.

The catalysed reaction is betaine aldehyde + NAD(+) + H2O = glycine betaine + NADH + 2 H(+). It participates in amine and polyamine biosynthesis; betaine biosynthesis via choline pathway; betaine from betaine aldehyde: step 1/1. Its function is as follows. Involved in the biosynthesis of the osmoprotectant glycine betaine. Catalyzes the irreversible oxidation of betaine aldehyde to the corresponding acid. This is Betaine aldehyde dehydrogenase from Ectopseudomonas mendocina (strain ymp) (Pseudomonas mendocina).